Consider the following 76-residue polypeptide: MAKIIRIKGKIVGKDEPMVFSKEYNVLKESDALEIMYSDMGSKHSVKRANIQVLEISEISQEEVLDPIVRKTLEMY.

Belongs to the eukaryotic ribosomal protein eL20 family. In terms of assembly, part of the 50S ribosomal subunit. Binds 23S rRNA.

This chain is Large ribosomal subunit protein eL20, found in Methanococcus vannielii (strain ATCC 35089 / DSM 1224 / JCM 13029 / OCM 148 / SB).